We begin with the raw amino-acid sequence, 341 residues long: UDP-3-O-acylglucosamine N-acyltransferase (341 aa).

Histidine 239 functions as the Proton acceptor in the catalytic mechanism.

This sequence belongs to the transferase hexapeptide repeat family. LpxD subfamily. Homotrimer.

It catalyses the reaction a UDP-3-O-[(3R)-3-hydroxyacyl]-alpha-D-glucosamine + a (3R)-hydroxyacyl-[ACP] = a UDP-2-N,3-O-bis[(3R)-3-hydroxyacyl]-alpha-D-glucosamine + holo-[ACP] + H(+). Its pathway is bacterial outer membrane biogenesis; LPS lipid A biosynthesis. Functionally, catalyzes the N-acylation of UDP-3-O-acylglucosamine using 3-hydroxyacyl-ACP as the acyl donor. Is involved in the biosynthesis of lipid A, a phosphorylated glycolipid that anchors the lipopolysaccharide to the outer membrane of the cell. This is UDP-3-O-acylglucosamine N-acyltransferase from Shewanella sp. (strain MR-7).